Consider the following 94-residue polypeptide: Small ribosomal subunit protein bS18 (94 aa).

Residues 1–12 show a composition bias toward low complexity; sequence MSEQNSRPQNSE. Residues 1–29 form a disordered region; it reads MSEQNSRPQNSERPQRSRRPQGGPRRRRK. Positions 16–29 are enriched in basic residues; it reads RSRRPQGGPRRRRK.

Belongs to the bacterial ribosomal protein bS18 family. Part of the 30S ribosomal subunit. Forms a tight heterodimer with protein bS6.

Functionally, binds as a heterodimer with protein bS6 to the central domain of the 16S rRNA, where it helps stabilize the platform of the 30S subunit. The protein is Small ribosomal subunit protein bS18 of Leuconostoc citreum (strain KM20).